We begin with the raw amino-acid sequence, 763 residues long: Phosphoglycerol transferase I (763 aa).

4 consecutive transmembrane segments (helical) span residues Met1–Ala21, Trp26–Tyr46, Ile77–Ile97, and Val108–Phe128.

It belongs to the OpgB family.

It is found in the cell inner membrane. It catalyses the reaction a phosphatidylglycerol + a membrane-derived-oligosaccharide D-glucose = a 1,2-diacyl-sn-glycerol + a membrane-derived-oligosaccharide 6-(glycerophospho)-D-glucose.. It participates in glycan metabolism; osmoregulated periplasmic glucan (OPG) biosynthesis. Transfers a phosphoglycerol residue from phosphatidylglycerol to the membrane-bound nascent glucan backbones. In Salmonella newport (strain SL254), this protein is Phosphoglycerol transferase I.